Reading from the N-terminus, the 271-residue chain is Elongation factor Ts (271 aa).

The tract at residues 76–79 is involved in Mg(2+) ion dislocation from EF-Tu; the sequence is TDFV.

The protein belongs to the EF-Ts family.

It is found in the cytoplasm. In terms of biological role, associates with the EF-Tu.GDP complex and induces the exchange of GDP to GTP. It remains bound to the aminoacyl-tRNA.EF-Tu.GTP complex up to the GTP hydrolysis stage on the ribosome. This is Elongation factor Ts from Mycobacterium ulcerans (strain Agy99).